The sequence spans 438 residues: ATP-dependent RNA helicase SUB2 (438 aa).

Positions 1–16 (MSHEEDLIDYSDEEIQ) are enriched in acidic residues. A disordered region spans residues 1 to 41 (MSHEEDLIDYSDEEIQPTEVPANGDAAAAKGGLAAPDASGE). Over residues 21 to 38 (PANGDAAAAKGGLAAPDA) the composition is skewed to low complexity. The short motif at 52 to 80 (TGFRDFLLKDELVRAITDCGFEHPSEVQQ) is the Q motif element. Residues 83–260 (IPQAILGNDV…KKFMQNPLEI (178 aa)) form the Helicase ATP-binding domain. 96–103 (AKSGLGKT) lines the ATP pocket. The DEAD box motif lies at 207 to 210 (DECD). The Helicase C-terminal domain maps to 288–433 (KLNDLLDNLE…EFPEDGISSA (146 aa)).

Belongs to the DEAD box helicase family. DECD subfamily.

Its subcellular location is the nucleus. The catalysed reaction is ATP + H2O = ADP + phosphate + H(+). Its function is as follows. ATP-binding RNA helicase involved in transcription elongation and required for the export of mRNA out of the nucleus. SUB2 also plays a role in pre-mRNA splicing and spliceosome assembly. May be involved in rDNA and telomeric silencing, and maintenance of genome integrity. This chain is ATP-dependent RNA helicase SUB2 (SUB2), found in Phaeosphaeria nodorum (strain SN15 / ATCC MYA-4574 / FGSC 10173) (Glume blotch fungus).